Consider the following 253-residue polypeptide: Ubiquinone/menaquinone biosynthesis C-methyltransferase UbiE (253 aa).

S-adenosyl-L-methionine-binding positions include Thr-76, Asp-97, and 125–126; that span reads DA.

The protein belongs to the class I-like SAM-binding methyltransferase superfamily. MenG/UbiE family.

It catalyses the reaction a 2-demethylmenaquinol + S-adenosyl-L-methionine = a menaquinol + S-adenosyl-L-homocysteine + H(+). The enzyme catalyses a 2-methoxy-6-(all-trans-polyprenyl)benzene-1,4-diol + S-adenosyl-L-methionine = a 5-methoxy-2-methyl-3-(all-trans-polyprenyl)benzene-1,4-diol + S-adenosyl-L-homocysteine + H(+). It functions in the pathway quinol/quinone metabolism; menaquinone biosynthesis; menaquinol from 1,4-dihydroxy-2-naphthoate: step 2/2. The protein operates within cofactor biosynthesis; ubiquinone biosynthesis. In terms of biological role, methyltransferase required for the conversion of demethylmenaquinol (DMKH2) to menaquinol (MKH2) and the conversion of 2-polyprenyl-6-methoxy-1,4-benzoquinol (DDMQH2) to 2-polyprenyl-3-methyl-6-methoxy-1,4-benzoquinol (DMQH2). In Azotobacter vinelandii (strain DJ / ATCC BAA-1303), this protein is Ubiquinone/menaquinone biosynthesis C-methyltransferase UbiE.